Here is a 339-residue protein sequence, read N- to C-terminus: UPF0324 membrane protein CPE0129 (339 aa).

A run of 8 helical transmembrane segments spans residues 12–30 (ILPG…EFLG), 35–54 (TIGA…NTLF), 90–112 (LGFN…TYFI), 122–144 (YSLL…VSPV), 156–178 (ITIV…SILY), 210–232 (VVEL…VLVF), 259–281 (WFII…GILG), and 316–338 (MLYG…NIFI).

This sequence belongs to the UPF0324 family.

Its subcellular location is the cell membrane. The sequence is that of UPF0324 membrane protein CPE0129 from Clostridium perfringens (strain 13 / Type A).